The chain runs to 380 residues: Ubiquitin-like protein 7 (380 aa).

Residues 18-98 enclose the Ubiquitin-like domain; that stretch reads TPKSILRLPE…VLRKSWPEPD (81 aa). The disordered stretch occupies residues 200 to 313; it reads APMPGTDSSS…SSGVQSGTPI (114 aa). Positions 206 to 221 are enriched in low complexity; the sequence is DSSSRSMPSSSYRDMP. At Ser230 the chain carries Phosphoserine. Low complexity-rich tracts occupy residues 240-253 and 270-293; these read TRST…SSRP and SELA…TPGT. Residues 294-313 are compositionally biased toward polar residues; the sequence is QGHSSGTSPMSSGVQSGTPI. Residues 333–377 form the UBA domain; that stretch reads SLQSQWQPQLQQLRDMGIQDDELSLRALQATGGDIQAALELIFAG.

Binds ubiquitin. Interacts with MAVS; this interaction enhances TRIM21-dependent 'Lys-27'-linked polyubiquitination of MAVS. In terms of processing, deubiquitinated by OTUD4 which stabilizes UBL7 expression. As to expression, ubiquitous. Highly expressed in heart, skeletal muscle, testis, thyroid and adrenal gland.

Its function is as follows. Interferon-stimulated protein that positively regulates RNA virus-triggered innate immune signaling. Mechanistically, promotes 'Lys-27'-linked polyubiquitination of MAVS through TRIM21 leading to enhanced the IFN signaling pathway. This is Ubiquitin-like protein 7 (UBL7) from Homo sapiens (Human).